Reading from the N-terminus, the 377-residue chain is All-trans-retinol dehydrogenase [NAD(+)] ADH4 (377 aa).

C47 contacts Zn(2+). 48 to 49 (PT) contributes to the NAD(+) binding site. Residues H68, C98, C101, C104, C112, and C179 each coordinate Zn(2+). NAD(+) is bound by residues 204–209 (GLGCVG), D228, K233, 297–299 (VGA), 320–322 (TFF), and R372.

This sequence belongs to the zinc-containing alcohol dehydrogenase family. Class-II subfamily. Dimer. It depends on Zn(2+) as a cofactor. In terms of tissue distribution, liver specific.

Its subcellular location is the cytoplasm. The catalysed reaction is all-trans-retinol + NAD(+) = all-trans-retinal + NADH + H(+). It carries out the reaction 9-cis-retinol + NAD(+) = 9-cis-retinal + NADH + H(+). The enzyme catalyses 20-oxo-(5Z,8Z,11Z,14Z)-eicosatetraenoate + NAD(+) + H2O = (5Z,8Z,11Z,14Z)-eicosatetraenedioate + NADH + 2 H(+). It catalyses the reaction 20-hydroxy-(5Z,8Z,11Z,14Z)-eicosatetraenoate + NAD(+) = 20-oxo-(5Z,8Z,11Z,14Z)-eicosatetraenoate + NADH + H(+). The catalysed reaction is 1,4-benzoquinone + NADH + H(+) = hydroquinone + NAD(+). With respect to regulation, oxidation of 20-HETE is inhibited by low concentrations of N-heptylformamide. Oxidation of 20-HETE is a decreased by 55-65% by either all-trans-retinol or all-trans-retinoic acid. Strongly inhibited by omega-hydroxy fatty acids. Its function is as follows. Catalyzes the NAD-dependent oxidation of either all-trans-retinol or 9-cis-retinol. Also oxidizes long chain omega-hydroxy fatty acids, such as 20-HETE, producing both the intermediate aldehyde, 20-oxoarachidonate and the end product, a dicarboxylic acid, (5Z,8Z,11Z,14Z)-eicosatetraenedioate. Also catalyzes the reduction of benzoquinones. This is All-trans-retinol dehydrogenase [NAD(+)] ADH4 from Rattus norvegicus (Rat).